The primary structure comprises 174 residues: Regenerating islet-derived protein 3-gamma (174 aa).

Positions 1-26 (MLPRVALTTMSWMLLSSLMLLSQVQG) are cleaved as a signal peptide. Positions 27–37 (EDAKEDVPTSR) are excised as a propeptide. Cystine bridges form between cysteine 40–cysteine 51, cysteine 68–cysteine 170, and cysteine 145–cysteine 162. The C-type lectin domain occupies 47–171 (YGSYCYALFS…CISELPYVCK (125 aa)). Residues 103–118 (WIGLHDPTLGQEPNRG) are sufficient to activate EXTL3. Histidine 107 is a binding site for Zn(2+). The short motif at 114 to 116 (EPN) is the EPN element. The Zn(2+) site is built by glutamate 121 and histidine 144.

As to quaternary structure, forms a hexameric membrane-permeabilizing oligomeric pore on membrane phospholipids. The hexamer is formed by three dimers related by helical symmetry. Forms filaments, filamentation traps pore complexes and limits damage to host cells. Interacts with EXTL3. Post-translationally, proteolytic processing by trypsin removes an inhibitory N-terminal propeptide and is essential for peptidoglycan binding and antibacterial activity. In terms of tissue distribution, expressed in injured skeletal muscles and sciatic nerve (at protein level). Expressed in the pancreas. Expression increases during the acute phase of pancreatitis.

It localises to the secreted. It is found in the cytoplasm. Its activity is regulated as follows. Lipopolysaccharide inhibits pore-forming activity, explaining why is bactericidal for Gram-positive but not Gram-negative bacteria. In terms of biological role, bactericidal C-type lectin which acts exclusively against Gram-positive bacteria and mediates bacterial killing by binding to surface-exposed carbohydrate moieties of peptidoglycan. Restricts bacterial colonization of the intestinal epithelial surface and consequently limits activation of adaptive immune responses by the microbiota. Functionally, acts as a hormone in response to different stimuli like anti-inflammatory signals, such as IL17A, or gut microbiome. Is secreted by different cell types to activate its receptor EXTL3 and induce cell specific signaling pathways. Induced by IL17A in keratinocytes, regulates keratinocyte proliferation and differentiation after skin injury. In parallel, inhibits skin inflammation through the inhibition of inflammatory cytokines such as IL6 and TNF. Induced by IL22 in lung epithelial cells, inhibits cytokine production and regulates allergic airway inflammation. Induced in small intestine by inulin-enriched diet and Lactobacillus gasseri enriched microbiome, plays a role in the improvement of gut barrier function, the regulation of energy balance and glucose levels. Modulates microbiota composition in duodenal contents. Produced by nociceptor in response to endotoxins, prevents endotoxic death by targeting kynurenine pathway in microglia. Has bacteriostatic activity. Its function is as follows. Has bactericidal activity against L.monocytogenes and methicillin-resistant S.aureus. The chain is Regenerating islet-derived protein 3-gamma from Rattus norvegicus (Rat).